The sequence spans 118 residues: uncharacterized protein (118 aa).

This is an uncharacterized protein from Escherichia coli (strain UTI89 / UPEC).